Here is a 226-residue protein sequence, read N- to C-terminus: MYSISFQEESLLPRERLVRLGAEQLSNQELLSILIRTGNKKENVFQIASKILSSVSSLTELRHMTLSELQGMSGIGQVKAIELQAMIELGSRISKAENFEGERILSSQKLAKKMQQELSHKKQEHLVALYLNTQNQIIHQQTIFIGSLTRSLAEPREILHYAIKHMATSIILVHNHPSGATRPSRDDDQVTEKIKEACEMMGFVLLDHLIVGGDSYYSYREETDLI.

The MPN domain maps to 103 to 225; it reads RILSSQKLAK…YYSYREETDL (123 aa). Histidine 174, histidine 176, and aspartate 187 together coordinate Zn(2+). A JAMM motif motif is present at residues 174 to 187; it reads HNHPSGATRPSRDD.

The protein belongs to the UPF0758 family.

This chain is UPF0758 protein SGO_1229, found in Streptococcus gordonii (strain Challis / ATCC 35105 / BCRC 15272 / CH1 / DL1 / V288).